Reading from the N-terminus, the 681-residue chain is Peroxisomal acyl-coenzyme A oxidase 2 (681 aa).

Position 9 is a phosphoserine (Ser-9). An N6-succinyllysine mark is found at Lys-66, Lys-137, Lys-453, Lys-561, and Lys-667. The Microbody targeting signal motif lies at 679–681; the sequence is SNL.

This sequence belongs to the acyl-CoA oxidase family. Homodimer. Requires FAD as cofactor. As to expression, liver and kidney.

Its subcellular location is the peroxisome. The enzyme catalyses (25R)-3alpha,7alpha,12alpha-trihydroxy-5beta-cholestan-26-oyl-CoA + A + H2O = (24R,25R)-3alpha,7alpha,12alpha,24-tetrahydroxy-5beta-cholestan-26-oyl-CoA + AH2. The catalysed reaction is (25S)-3alpha,7alpha,12alpha-trihydroxy-5beta-cholestan-26-oyl-CoA + O2 = (24E)-3alpha,7alpha,12alpha-trihydroxy-5beta-cholest-24-en-26-oyl-CoA + H2O2. Oxidizes the CoA esters of the bile acid intermediates di- and tri-hydroxycholestanoic acids. Capable of oxidizing short as well as long chain 2-methyl branched fatty acids. This Oryctolagus cuniculus (Rabbit) protein is Peroxisomal acyl-coenzyme A oxidase 2.